A 429-amino-acid chain; its full sequence is S-adenosylmethionine synthase (429 aa).

Residue His-14 coordinates ATP. Position 16 (Asp-16) interacts with Mg(2+). Glu-42 lines the K(+) pocket. L-methionine-binding residues include Glu-55 and Gln-98. The tract at residues 98–108 (QSADINRGVDR) is flexible loop. ATP is bound by residues 165–167 (DAK), 252–253 (KF), Asp-261, 267–268 (RK), Ala-284, and Lys-288. Asp-261 contacts L-methionine. Lys-292 is a binding site for L-methionine.

This sequence belongs to the AdoMet synthase family. In terms of assembly, homotetramer; dimer of dimers. It depends on Mg(2+) as a cofactor. The cofactor is K(+).

The protein localises to the cytoplasm. It carries out the reaction L-methionine + ATP + H2O = S-adenosyl-L-methionine + phosphate + diphosphate. It participates in amino-acid biosynthesis; S-adenosyl-L-methionine biosynthesis; S-adenosyl-L-methionine from L-methionine: step 1/1. Its function is as follows. Catalyzes the formation of S-adenosylmethionine (AdoMet) from methionine and ATP. The overall synthetic reaction is composed of two sequential steps, AdoMet formation and the subsequent tripolyphosphate hydrolysis which occurs prior to release of AdoMet from the enzyme. The polypeptide is S-adenosylmethionine synthase (Porphyromonas gingivalis (strain ATCC 33277 / DSM 20709 / CIP 103683 / JCM 12257 / NCTC 11834 / 2561)).